The following is a 91-amino-acid chain: UPF0367 protein cce_2199 (91 aa).

Belongs to the UPF0367 family.

The protein is UPF0367 protein cce_2199 of Crocosphaera subtropica (strain ATCC 51142 / BH68) (Cyanothece sp. (strain ATCC 51142)).